Here is a 591-residue protein sequence, read N- to C-terminus: Aspartate--tRNA(Asp/Asn) ligase (591 aa).

Glu-176 contacts L-aspartate. The aspartate stretch occupies residues 200–203 (QLFK). An L-aspartate-binding site is contributed by Arg-222. ATP-binding positions include 222–224 (RDE) and Gln-231. His-450 serves as a coordination point for L-aspartate. Residue Glu-484 participates in ATP binding. Arg-491 serves as a coordination point for L-aspartate. 536 to 539 (GLDR) provides a ligand contact to ATP.

Belongs to the class-II aminoacyl-tRNA synthetase family. Type 1 subfamily. In terms of assembly, homodimer.

The protein resides in the cytoplasm. It carries out the reaction tRNA(Asx) + L-aspartate + ATP = L-aspartyl-tRNA(Asx) + AMP + diphosphate. In terms of biological role, aspartyl-tRNA synthetase with relaxed tRNA specificity since it is able to aspartylate not only its cognate tRNA(Asp) but also tRNA(Asn). Reaction proceeds in two steps: L-aspartate is first activated by ATP to form Asp-AMP and then transferred to the acceptor end of tRNA(Asp/Asn). The polypeptide is Aspartate--tRNA(Asp/Asn) ligase (Bacillus cereus (strain B4264)).